We begin with the raw amino-acid sequence, 353 residues long: Sorbitol dehydrogenase (353 aa).

Cysteine 45 provides a ligand contact to Zn(2+). Residue tyrosine 51 coordinates substrate. 2 residues coordinate Zn(2+): histidine 70 and glutamate 71. Substrate is bound at residue glutamate 156. NAD(+)-binding positions include valine 184, aspartate 204, arginine 209, 271-273, and 296-298; these read VGL and IFR. Substrate is bound by residues arginine 298 and tyrosine 299.

The protein belongs to the zinc-containing alcohol dehydrogenase family. Homotetramer. Zn(2+) serves as cofactor.

It carries out the reaction keto-D-fructose + NADH + H(+) = D-sorbitol + NAD(+). The catalysed reaction is xylitol + NAD(+) = D-xylulose + NADH + H(+). It catalyses the reaction L-iditol + NAD(+) = keto-L-sorbose + NADH + H(+). Functionally, polyol dehydrogenase that catalyzes the NAD(+)-dependent oxidation of various sugar alcohols. Is mostly active with D-sorbitol (D-glucitol), xylitol and L-iditol as substrates, leading to the C2-oxidized products D-fructose, D-xylulose and L-sorbose, respectively. This chain is Sorbitol dehydrogenase, found in Bacillus subtilis (strain 168).